Reading from the N-terminus, the 277-residue chain is Caspase-3 (277 aa).

Met1 is subject to N-acetylmethionine. 2 consecutive propeptides follow at residues 1-9 (MENNETSVD) and 10-28 (AKSI…KSMD). Lys11 carries the post-translational modification N6-acetyllysine. Ser26 is modified (phosphoserine). Residues His121 and Cys163 contribute to the active site. Cys163 bears the S-nitrosocysteine; in inhibited form mark.

It belongs to the peptidase C14A family. In terms of assembly, heterotetramer that consists of two anti-parallel arranged heterodimers, each one formed by a 17 kDa (p17) and a 12 kDa (p12) subunit. Interacts with BIRC6/bruce. Post-translationally, cleavage by granzyme B, caspase-6, caspase-8 and caspase-10 generates the two active subunits. Additional processing of the propeptides is likely due to the autocatalytic activity of the activated protease. Active heterodimers between the small subunit of caspase-7 protease and the large subunit of caspase-3 also occur and vice versa. In terms of processing, S-nitrosylated on its catalytic site cysteine in unstimulated cell lines and denitrosylated upon activation of the Fas apoptotic pathway, associated with an increase in intracellular caspase activity. Fas therefore activates caspase-3 not only by inducing the cleavage of the caspase zymogen to its active subunits, but also by stimulating the denitrosylation of its active site thiol. Ubiquitinated by BIRC6; this activity is inhibited by DIABLO/SMAC.

The protein localises to the cytoplasm. The enzyme catalyses Strict requirement for an Asp residue at positions P1 and P4. It has a preferred cleavage sequence of Asp-Xaa-Xaa-Asp-|- with a hydrophobic amino-acid residue at P2 and a hydrophilic amino-acid residue at P3, although Val or Ala are also accepted at this position.. Inhibited by BIRC6; following inhibition of BIRC6-caspase binding by DIABLO/SMAC, BIRC6 is subjected to caspase cleavage, leading to an increase in active caspases. Involved in the activation cascade of caspases responsible for apoptosis execution. At the onset of apoptosis, it proteolytically cleaves poly(ADP-ribose) polymerase PARP1 at a '216-Asp-|-Gly-217' bond. Cleaves and activates sterol regulatory element binding proteins (SREBPs) between the basic helix-loop-helix leucine zipper domain and the membrane attachment domain. Cleaves and activates caspase-6, -7 and -9 (CASP6, CASP7 and CASP9, respectively). Cleaves and inactivates interleukin-18 (IL18). Triggers cell adhesion in sympathetic neurons through RET cleavage. Cleaves IL-1 beta between an Asp and an Ala, releasing the mature cytokine which is involved in a variety of inflammatory processes. Cleaves and inhibits serine/threonine-protein kinase AKT1 in response to oxidative stress. Acts as an inhibitor of type I interferon production during virus-induced apoptosis by mediating cleavage of antiviral proteins CGAS, IRF3 and MAVS, thereby preventing cytokine overproduction. Also involved in pyroptosis by mediating cleavage and activation of gasdermin-E (GSDME). Cleaves XRCC4 and phospholipid scramblase proteins XKR4, XKR8 and XKR9, leading to promote phosphatidylserine exposure on apoptotic cell surface. Cleaves BIRC6 following inhibition of BIRC6-caspase binding by DIABLO/SMAC. The polypeptide is Caspase-3 (CASP3) (Oryctolagus cuniculus (Rabbit)).